A 221-amino-acid chain; its full sequence is Kynurenine formamidase (221 aa).

Residue phenylalanine 30 participates in substrate binding. Zn(2+) is bound by residues histidine 60, histidine 64, and aspartate 66. Histidine 70 serves as the catalytic Proton donor/acceptor. Zn(2+) contacts are provided by histidine 172 and glutamate 184.

The protein belongs to the Cyclase 1 superfamily. KynB family. In terms of assembly, homodimer. It depends on Zn(2+) as a cofactor.

It catalyses the reaction N-formyl-L-kynurenine + H2O = L-kynurenine + formate + H(+). The protein operates within amino-acid degradation; L-tryptophan degradation via kynurenine pathway; L-kynurenine from L-tryptophan: step 2/2. Functionally, catalyzes the hydrolysis of N-formyl-L-kynurenine to L-kynurenine, the second step in the kynurenine pathway of tryptophan degradation. The polypeptide is Kynurenine formamidase (Polaromonas sp. (strain JS666 / ATCC BAA-500)).